Reading from the N-terminus, the 293-residue chain is Elongation factor Ts (293 aa).

Positions 80-83 (TDFV) are involved in Mg(2+) ion dislocation from EF-Tu.

Belongs to the EF-Ts family.

It is found in the cytoplasm. In terms of biological role, associates with the EF-Tu.GDP complex and induces the exchange of GDP to GTP. It remains bound to the aminoacyl-tRNA.EF-Tu.GTP complex up to the GTP hydrolysis stage on the ribosome. The protein is Elongation factor Ts of Herminiimonas arsenicoxydans.